We begin with the raw amino-acid sequence, 218 residues long: Large ribosomal subunit protein uL3c (218 aa).

Positions 127–161 (GFSRGPMTHGSKNHREPGSTGAGTTPGRIYPGKRM) are disordered.

The protein belongs to the universal ribosomal protein uL3 family. Part of the 50S ribosomal subunit.

Its subcellular location is the plastid. The protein resides in the organellar chromatophore. Its function is as follows. One of the primary rRNA binding proteins, it binds directly near the 3'-end of the 23S rRNA, where it nucleates assembly of the 50S subunit. The polypeptide is Large ribosomal subunit protein uL3c (rpl3) (Paulinella chromatophora).